A 785-amino-acid chain; its full sequence is Probable splicing factor 3A subunit 1 (785 aa).

Met1 bears the N-acetylmethionine mark. Residues 1-42 (MFSSMQILPLEAPPTDGKLGPLPPSQLTDQEVEERELQAEQN) form a disordered region. One copy of the SURP motif 1 repeat lies at 71–113 (IVEKTAQFVSKNGLEFEKRIIVSNEKNAKFNFLKSSDPYHAFY). The disordered stretch occupies residues 124-175 (NKDGAQGTDDSDGTTDPQLDTGAADESEAGDTQPDLQAQFRIPSKPLEAPEP). The stretch at 193–235 (IIKLTAQFVARNGKSFLTGLSNRENNNPQFHFMKPTHSMFTFF) is one SURP motif 2 repeat. Disordered regions lie at residues 522-554 (NANGEEQGDGVYGDPNSFPGPAALPPPRPGVPI) and 639-713 (RPYG…PNEN). 2 stretches are compositionally biased toward pro residues: residues 543–554 (AALPPPRPGVPI) and 653–674 (QPPPMPGMAPPPPPEEAPPPLP). A compositionally biased stretch (basic and acidic residues) spans 677–686 (PEAKRQKFDE). Positions 707–782 (VSKPNENDGQ…LTLSLRERGG (76 aa)) constitute a Ubiquitin-like domain.

As to quaternary structure, component of splicing factor SF3A which is composed of three subunits.

Its subcellular location is the nucleus. In Arabidopsis thaliana (Mouse-ear cress), this protein is Probable splicing factor 3A subunit 1.